The following is a 161-amino-acid chain: Ureidoglycolate lyase (161 aa).

Belongs to the ureidoglycolate lyase family. In terms of assembly, homodimer. Ni(2+) is required as a cofactor.

The catalysed reaction is (S)-ureidoglycolate = urea + glyoxylate. It functions in the pathway nitrogen metabolism; (S)-allantoin degradation. In terms of biological role, catalyzes the catabolism of the allantoin degradation intermediate (S)-ureidoglycolate, generating urea and glyoxylate. Involved in the utilization of allantoin as nitrogen source. The polypeptide is Ureidoglycolate lyase (Rhodobacter capsulatus (strain ATCC BAA-309 / NBRC 16581 / SB1003)).